Consider the following 255-residue polypeptide: Cytochrome c oxidase subunit 2 (255 aa).

At 1–42 (MKFFFFSFINYKVLNDAARPWQIGFQDPATPIMEGIVNLHHD) the chain is on the mitochondrial intermembrane side. The chain crosses the membrane as a helical span at residues 43–63 (IIFFLIIIIIFVSWILFRTLF). The Mitochondrial matrix portion of the chain corresponds to 64–83 (LFNSKTNPVAYNFSHGTFIE). The chain crosses the membrane as a helical span at residues 84-104 (LLWTLTPSLVLIGIAVPSFAL). Topologically, residues 105–255 (LYSIDEIIDP…IRWVQNKILD (151 aa)) are mitochondrial intermembrane. Residues His-187, Cys-222, Glu-224, Cys-226, His-230, and Met-233 each contribute to the Cu cation site. Glu-224 serves as a coordination point for Mg(2+).

Belongs to the cytochrome c oxidase subunit 2 family. Component of the cytochrome c oxidase (complex IV, CIV), a multisubunit enzyme composed of a catalytic core of 3 subunits and several supernumerary subunits. The complex exists as a monomer or a dimer and forms supercomplexes (SCs) in the inner mitochondrial membrane with ubiquinol-cytochrome c oxidoreductase (cytochrome b-c1 complex, complex III, CIII). Requires Cu cation as cofactor.

It is found in the mitochondrion inner membrane. It catalyses the reaction 4 Fe(II)-[cytochrome c] + O2 + 8 H(+)(in) = 4 Fe(III)-[cytochrome c] + 2 H2O + 4 H(+)(out). In terms of biological role, component of the cytochrome c oxidase, the last enzyme in the mitochondrial electron transport chain which drives oxidative phosphorylation. The respiratory chain contains 3 multisubunit complexes succinate dehydrogenase (complex II, CII), ubiquinol-cytochrome c oxidoreductase (cytochrome b-c1 complex, complex III, CIII) and cytochrome c oxidase (complex IV, CIV), that cooperate to transfer electrons derived from NADH and succinate to molecular oxygen, creating an electrochemical gradient over the inner membrane that drives transmembrane transport and the ATP synthase. Cytochrome c oxidase is the component of the respiratory chain that catalyzes the reduction of oxygen to water. Electrons originating from reduced cytochrome c in the intermembrane space (IMS) are transferred via the dinuclear copper A center (CU(A)) of subunit 2 and heme A of subunit 1 to the active site in subunit 1, a binuclear center (BNC) formed by heme A3 and copper B (CU(B)). The BNC reduces molecular oxygen to 2 water molecules using 4 electrons from cytochrome c in the IMS and 4 protons from the mitochondrial matrix. This chain is Cytochrome c oxidase subunit 2 (COX2), found in Cyanidium caldarium (Red alga).